We begin with the raw amino-acid sequence, 108 residues long: UPF0060 membrane protein BH2744 (108 aa).

Transmembrane regions (helical) follow at residues 6–26 (TLFL…WLWL), 31–51 (PVYL…IATF), 60–80 (VYAA…WWID), and 86–106 (TYDW…LWAP).

Belongs to the UPF0060 family.

The protein localises to the cell membrane. This chain is UPF0060 membrane protein BH2744, found in Halalkalibacterium halodurans (strain ATCC BAA-125 / DSM 18197 / FERM 7344 / JCM 9153 / C-125) (Bacillus halodurans).